The chain runs to 291 residues: Syntaxin-1A homolog (291 aa).

Residues Met1–Met24 form a disordered region. Residues Met1–Lys266 are Cytoplasmic-facing. Positions Asn69 to Leu95 form a coiled coil. In terms of domain architecture, t-SNARE coiled-coil homology spans Leu193–Ala255. A helical; Anchor for type IV membrane protein membrane pass occupies residues Ile267–Tyr287. At Ala288–Leu291 the chain is on the extracellular side.

The protein belongs to the syntaxin family. In terms of assembly, interacts (via N-terminus, in open or in closed conformation) with unc-18; the interaction is direct. Interaction in open conformation with unc-18 promotes synaptic vesicle docking and tethering. Interaction via N-terminus with unc-18 mediates the secretion of the neurotransmitter acetylcholine from cholinergic motor neurons. Interaction with unc-18 is reduced in the presence of unc-13. As to expression, expressed throughout the head ganglion, nerve ring, ventral cord, dorsal cord, intestine, vulva and spermatheca.

The protein localises to the cell membrane. It is found in the cell projection. The protein resides in the axon. Its subcellular location is the dendrite. It localises to the perikaryon. In terms of biological role, plays a critical role in several secretory processes, including cuticle secretion and neurotransmitter release, and probably assists in neuronal membrane maturation or the final stages of neuronal differentiation. Plays a role in synaptic vesicle docking and tethering through its association with unc-18. Through binding to unc-18 mediates the release of the neurotransmitter acetylcholine from cholinergic motor neurons, and thereby promotes locomotory behaviors. Essential for embryonic viability and development. Has a role in dauer formation and adult life span. Required for locomotion. Probably by regulating neuronal transmission downstream of lin-3 and receptor lin-23 and phospholipase plc-3 and upstream of innexin unc-7 and egl-4/PKG in ALA neurons, involved in the decrease in pharyngeal pumping during the quiescent state that precedes each larval molt. The polypeptide is Syntaxin-1A homolog (Caenorhabditis elegans).